We begin with the raw amino-acid sequence, 171 residues long: Transcriptional repressor NrdR (171 aa).

Residues 1 to 21 (MQCPHCQHTDSRVLESRSSEN) form a disordered region. A zinc finger spans residues 3-34 (CPHCQHTDSRVLESRSSENGQSIRRRRECLQC). The span at 7-18 (QHTDSRVLESRS) shows a compositional bias: basic and acidic residues. The ATP-cone domain maps to 49-139 (ITVIKKDGKR…VYGNFQGIRD (91 aa)).

The protein belongs to the NrdR family. It depends on Zn(2+) as a cofactor.

Negatively regulates transcription of bacterial ribonucleotide reductase nrd genes and operons by binding to NrdR-boxes. This Microcystis aeruginosa (strain NIES-843 / IAM M-2473) protein is Transcriptional repressor NrdR.